A 124-amino-acid polypeptide reads, in one-letter code: Galanin peptides (124 aa).

A signal peptide spans 1-19 (MARGSVILLAWLLLVATLS). Residues 20–30 (ATLGLGMPTKE) constitute a propeptide that is removed on maturation. Position 61 is a threonine amide (Thr61). Ser117 and Ser118 each carry phosphoserine.

The protein belongs to the galanin family.

The protein resides in the secreted. Endocrine hormone of the central and peripheral nervous systems that binds and activates the G protein-coupled receptors GALR1, GALR2, and GALR3. This small neuropeptide may regulate diverse physiologic functions including contraction of smooth muscle of the gastrointestinal and genitourinary tract, growth hormone and insulin release and adrenal secretion. This Rattus norvegicus (Rat) protein is Galanin peptides (Gal).